An 870-amino-acid chain; its full sequence is MANDVVLTPMMKQFFELKAKHPDAIMLFRCGDFYETYSEDAIVASEILGITLTKRANGQAKSVEMAGFPFHALDTYLPKLVRAGKRVAICDQLEDPKMTKKLVKRGITELVTPGVAINDNVLSYKENNFLAAVHFGKASCGVAFLDISTGEFLTAEGPFDYIDKLLNNFAPKEVLFERGKRGMFEGNFGSKFFTFELDDWVFNESSSREKLLKHFETKNLKGFGVEHLKNGIVASGAILQYLNMTQHYQIGHITSLSRIEEDRYVRLDKFTVRSLELIGSMNEGGTSLLDVIDRTISPMGARLLKRWVVFPLKDEKPVNERLDVVEYFFREPDFKEFIEEKLHLIGDLERIVSKAAVGRISPREVVQLKVALQAIEPIKNACLNADNGSLRRIGEQLNLCLSIREKIAKEVKNDPPLLVNKGGVIADGVNAELDELRQIAFSGKDYLLKVQQRESELTGIPSLKIAYNNVFGYYIEVRNTHKDKVPADWIRKQTLVNAERYITQELKEYEEKILGAEDKILVLETKLYNELVVALAEFIPAIQINASQIARLDCLLAFANVAKENNYIRPVVEDSEVIDIRQGRHPVIEKQLPVGEKYIANDVFLDSETQQIIIITGPNMAGKSALLRQTALITLLAQMGSFVPAESARIGMVDKIFTRVGASDNISVGESTFMVEMNEAANILNNLSSRSLVLFDELGRGTSTYDGISIAWAIVEHIHEHPKAKARTLFATHYHELNEMEKSFKRIKNYNVSVKEIDNKVIFLRKLERGGSEHSFGIHVAKMAGMPKSIVKRANDILHQLETDNRQQGIAKPTAEIASGRSGMQLSFFQLDDPVLSQIRDEILNLDVNNLTPLEALNKLNDIKKIVKGK.

An ATP-binding site is contributed by 617–624 (GPNMAGKS).

It belongs to the DNA mismatch repair MutS family.

This protein is involved in the repair of mismatches in DNA. It is possible that it carries out the mismatch recognition step. This protein has a weak ATPase activity. The sequence is that of DNA mismatch repair protein MutS from Phocaeicola vulgatus (strain ATCC 8482 / DSM 1447 / JCM 5826 / CCUG 4940 / NBRC 14291 / NCTC 11154) (Bacteroides vulgatus).